A 569-amino-acid polypeptide reads, in one-letter code: Urease subunit alpha (569 aa).

The Urease domain maps to 131–569; sequence GSIDTHIHFI…VPMAQRYFLL (439 aa). Histidine 136, histidine 138, and lysine 219 together coordinate Ni(2+). The residue at position 219 (lysine 219) is an N6-carboxylysine. Histidine 221 contacts substrate. Ni(2+)-binding residues include histidine 248 and histidine 274. Histidine 322 acts as the Proton donor in catalysis. Aspartate 362 is a Ni(2+) binding site.

Belongs to the metallo-dependent hydrolases superfamily. Urease alpha subunit family. Heterotrimer of UreA (gamma), UreB (beta) and UreC (alpha) subunits. Three heterotrimers associate to form the active enzyme. Ni cation is required as a cofactor. Carboxylation allows a single lysine to coordinate two nickel ions.

The protein localises to the cytoplasm. The catalysed reaction is urea + 2 H2O + H(+) = hydrogencarbonate + 2 NH4(+). It functions in the pathway nitrogen metabolism; urea degradation; CO(2) and NH(3) from urea (urease route): step 1/1. The sequence is that of Urease subunit alpha from Prochlorococcus marinus (strain MIT 9301).